We begin with the raw amino-acid sequence, 300 residues long: Pantoate kinase (300 aa).

The protein belongs to the GHMP kinase family. PoK subfamily. Homodimer.

The catalysed reaction is (R)-pantoate + ATP = (R)-4-phosphopantoate + ADP + H(+). The protein operates within cofactor biosynthesis; coenzyme A biosynthesis. With respect to regulation, moderately stimulated in the presence of potassium cations. Inhibited by increasing concentrations of pantoate. Activity is not affected by CoA/acetyl-CoA. In terms of biological role, phosphorylates (R)-pantoate to form (R)-4-phosphopantoate in the CoA biosynthesis pathway. Displays broad nucleotide specificity and utilizes ATP, GTP, UTP, and CTP with comparable catalytic efficiencies. The chain is Pantoate kinase from Thermococcus kodakarensis (strain ATCC BAA-918 / JCM 12380 / KOD1) (Pyrococcus kodakaraensis (strain KOD1)).